A 323-amino-acid polypeptide reads, in one-letter code: Melanocortin receptor 3 (323 aa).

At Met1 to Gln37 the chain is on the extracellular side. Asn2, Asn16, and Asn28 each carry an N-linked (GlcNAc...) asparagine glycan. The chain crosses the membrane as a helical span at residues Val38 to Val63. Residues Val64–Phe75 lie on the Cytoplasmic side of the membrane. The chain crosses the membrane as a helical span at residues Phe76 to Val100. The Extracellular portion of the chain corresponds to Ile101–Asn118. A helical membrane pass occupies residues Ile119 to Ile140. The Cytoplasmic segment spans residues Asp141 to Lys160. A helical transmembrane segment spans residues Ala161–Ile181. The Extracellular segment spans residues Tyr182–Lys186. The chain crosses the membrane as a helical span at residues Met187–Met210. Topologically, residues Phe211–Thr245 are cytoplasmic. A helical transmembrane segment spans residues Ile246–Cys268. At Pro269–Tyr277 the chain is on the extracellular side. A helical transmembrane segment spans residues Thr278–Phe301. Over Arg302–Gly323 the chain is Cytoplasmic. Cys315 is lipidated: S-palmitoyl cysteine.

Belongs to the G-protein coupled receptor 1 family. Brain.

The protein resides in the cell membrane. Its function is as follows. Receptor for MSH (alpha, beta and gamma) and ACTH. This receptor is mediated by G proteins which activate adenylate cyclase. Required for expression of anticipatory patterns of activity and wakefulness during periods of limited nutrient availability and for the normal regulation of circadian clock activity in the brain. This Mus musculus (Mouse) protein is Melanocortin receptor 3 (Mc3r).